The sequence spans 452 residues: Cobyrinate a,c-diamide synthase (452 aa).

The GATase cobBQ-type domain occupies 248 to 441 (RVAYALDAAF…LHIHFYQNLL (194 aa)). The Nucleophile role is filled by C330.

Belongs to the CobB/CbiA family. Mg(2+) is required as a cofactor.

It catalyses the reaction cob(II)yrinate + 2 L-glutamine + 2 ATP + 2 H2O = cob(II)yrinate a,c diamide + 2 L-glutamate + 2 ADP + 2 phosphate + 2 H(+). It functions in the pathway cofactor biosynthesis; adenosylcobalamin biosynthesis; cob(II)yrinate a,c-diamide from sirohydrochlorin (anaerobic route): step 10/10. In terms of biological role, catalyzes the ATP-dependent amidation of the two carboxylate groups at positions a and c of cobyrinate, using either L-glutamine or ammonia as the nitrogen source. This chain is Cobyrinate a,c-diamide synthase, found in Listeria monocytogenes serotype 4b (strain F2365).